The following is a 706-amino-acid chain: Parasporal crystal protein Cry18Aa (706 aa).

It belongs to the delta endotoxin family.

Its function is as follows. Binds to the brush border membrane vesicles of scarab larvae and somehow damages the gut wall to allow the vegetative cells of P.popilliae to enter the hemolymph. Active on M.melolontha. The polypeptide is Parasporal crystal protein Cry18Aa (cry18Aa) (Paenibacillus popilliae (Bacillus popilliae)).